Reading from the N-terminus, the 739-residue chain is Ankyrin repeat and SAM domain-containing protein 6 (739 aa).

8 ANK repeats span residues 1–30, 57–86, 91–120, 124–156, 158–188, 192–221, 226–255, and 259–290; these read MGASVLAMAARGGHTHTVKLLLENGAFVDD, LEVRALLAAAQHGQGAAVALLLDWGSDARV, TGWSALMLAAAGGSLSVCQQLVERGADPDH, LGNTALEVALQLRRRDVQKYLDNITSVRPRPDD, KKRPDVFHALKLGNAQLVKEIVEQDAAQVDV, DGASPLMMAAVSGQLEVVQLLVEKRADVDR, HGWTALMQATYHGNKEVVKFLLSQGADVQL, and NGYTAFDLVMLLNDPDTELVRLLASVCMLVDK. Basic residues predominate over residues 295-305; it reads QRGKSALRRRA. Disordered stretches follow at residues 295-320 and 449-645; these read QRGKSALRRRASAGTPSPPEDKTGLK and LRDA…ITDE. Positions 462 to 478 are enriched in polar residues; the sequence is PGRSSAGSDTASISRVV. 2 stretches are compositionally biased toward low complexity: residues 490–506 and 582–592; these read GPSPSNSGSYNSAHSSG and SSRSKSTSPTL. Positions 593 to 603 are enriched in pro residues; it reads TPSPSPTPAHT. Positions 604 to 641 are enriched in low complexity; the sequence is PAPAHTPAHRPTGASADSQGSASTQQRSRSSGGSSSGT. The SAM domain occupies 643–706; it reads TDEDELSGIL…LAAISELNAG (64 aa).

The protein localises to the cell projection. It localises to the cilium. In terms of biological role, required for renal function. The sequence is that of Ankyrin repeat and SAM domain-containing protein 6 (anks6) from Danio rerio (Zebrafish).